We begin with the raw amino-acid sequence, 386 residues long: uncharacterized protein (386 aa).

Residue lysine 185 is modified to N6-(pyridoxal phosphate)lysine.

This sequence belongs to the DegT/DnrJ/EryC1 family. Pyridoxal 5'-phosphate serves as cofactor.

This is an uncharacterized protein from Methanocaldococcus jannaschii (strain ATCC 43067 / DSM 2661 / JAL-1 / JCM 10045 / NBRC 100440) (Methanococcus jannaschii).